The primary structure comprises 493 residues: Anthranilate synthase component 1 (493 aa).

L-tryptophan is bound by residues serine 48 and 273 to 275 (PYM). 308–309 (GT) contributes to the chorismate binding site. Glutamate 335 lines the Mg(2+) pocket. Chorismate is bound by residues tyrosine 423, arginine 443, 457–459 (GGG), and glycine 459. Mg(2+) is bound at residue glutamate 472.

This sequence belongs to the anthranilate synthase component I family. As to quaternary structure, heterotetramer consisting of two non-identical subunits: a beta subunit (TrpG) and a large alpha subunit (TrpE). It depends on Mg(2+) as a cofactor.

The catalysed reaction is chorismate + L-glutamine = anthranilate + pyruvate + L-glutamate + H(+). The protein operates within amino-acid biosynthesis; L-tryptophan biosynthesis; L-tryptophan from chorismate: step 1/5. With respect to regulation, feedback inhibited by tryptophan. Functionally, part of a heterotetrameric complex that catalyzes the two-step biosynthesis of anthranilate, an intermediate in the biosynthesis of L-tryptophan. In the first step, the glutamine-binding beta subunit (TrpG) of anthranilate synthase (AS) provides the glutamine amidotransferase activity which generates ammonia as a substrate that, along with chorismate, is used in the second step, catalyzed by the large alpha subunit of AS (TrpE) to produce anthranilate. In the absence of TrpG, TrpE can synthesize anthranilate directly from chorismate and high concentrations of ammonia. The chain is Anthranilate synthase component 1 (trpE) from Pseudomonas putida (Arthrobacter siderocapsulatus).